A 369-amino-acid chain; its full sequence is MAGITMGSEHMYDDTTFPTNDPESSWKIVLAGEKFMTASAALKTIVGCVKNPLITFSDDGLMIQGTVCGQRMFVPIDCTSFSEYEWRGPTAIFLALTDSRRTLLDAFKCDKKKVVEVCFTFRGEPPCRHLTQTVTYANDGCSFSSTIVKYELWSASIICPQKTPDATFSLNKQQLSKILTVAAKVQHEELIFALKAEGGFYAGTICDVISFDIDGSAMVQYPYNATSHASSALIVACGKKKTNKSIAVTAYGSGKPFCLALEDTNAFRNVVQKIKTGAAGADLGFYTTCDPPMLCVRPHVFGSPTAFLFCNSDCMSIYELEEVSAVSGAIKSKRISEYFPKVSNIGSRKRGPSSPPFEREGKLAKVINQ.

The disordered stretch occupies residues 345-369 (IGSRKRGPSSPPFEREGKLAKVINQ).

Belongs to the herpesviridae DNA polymerase processivity factor family. In terms of assembly, interacts with the DNA polymerase catalytic subunit. Interacts with the origin-binding protein.

The protein resides in the host nucleus. In terms of biological role, plays an essential role in viral DNA replication by acting as the polymerase accessory subunit. Associates with the viral polymerase to increase its processivity and forms high-affinity direct interactions with DNA. Facilitates the origin-binding protein UL9 loading onto DNA thus increasing its ability to assemble into a functional complex capable of unwinding duplex DNA. The protein is DNA polymerase processivity factor (MDV055) of Gallus gallus (Chicken).